The primary structure comprises 814 residues: Rho GTPase-activating protein 26 (814 aa).

A BAR domain is found at 7-262; it reads EFSDCCLDSP…MKENPLEHKT (256 aa). One can recognise a PH domain in the interval 265-369; sequence PYTMEGYLYV…WMEAMDGREP (105 aa). Positions 383–568 constitute a Rho-GAP domain; sequence AQLDSIGFSI…ILIENHEKIF (186 aa). Positions 624–648 are enriched in low complexity; the sequence is LESVSSNPNSILNSSSSLQPNMNSS. The disordered stretch occupies residues 624 to 696; sequence LESVSSNPNS…MPTSSTSSDS (73 aa). The segment covering 662–672 has biased composition (pro residues); that stretch reads SLPPNPSPTSP. Phosphoserine is present on serine 668. Threonine 670 carries the phosphothreonine modification. Serine 671 bears the Phosphoserine mark. The span at 673-696 shows a compositional bias: low complexity; sequence LSPSWPMFSAPSSPMPTSSTSSDS. The SH3 domain occupies 756–814; sequence TPFRKAKALYACKAEHDSELSFTAGTVFDNVHPSQEPGWLEGTLNGKTGLIPENYVEFL.

Interacts with NYAP1, NYAP2 and MYO16. Interacts with MICAL1 and WDR44. Binds to the C-terminus of PTK2/FAK1. In terms of assembly, (Microbial infection) Interacts with human parainfluenza virus type 2 proteins P and V. Post-translationally, phosphorylated in a PINK1-dependent fashion promoting retrograde mitochondrial trafficking and clustering.

It is found in the endosome membrane. The protein localises to the cytoplasm. Its subcellular location is the cell junction. The protein resides in the focal adhesion. It localises to the cytoskeleton. GTPase-activating protein for RHOA and CDC42. Facilitates mitochondrial quality control by promoting Parkin-mediated recruitment of autophagosomes to damaged mitochondria. Negatively regulates the growth of human parainfluenza virus type 2 by inhibiting hPIV-2-mediated RHOA activation via interaction with two of its viral proteins P and V. In terms of biological role, associates with MICAL1 on the endosomal membrane to promote Rab8-Rab10-dependent tubule extension. After dissociation of MICAL1, recruits WDR44 which connects the endoplasmic reticulum (ER) with the endosomal tubule, thereby participating in the export of a subset of neosynthesized proteins. This Homo sapiens (Human) protein is Rho GTPase-activating protein 26 (ARHGAP26).